Here is a 692-residue protein sequence, read N- to C-terminus: Potassium-transporting ATPase ATP-binding subunit (692 aa).

The next 4 membrane-spanning stretches (helical) occupy residues 50 to 70 (PIMF…FLPS), 74 to 94 (SIPG…VLFA), 240 to 260 (LTLI…YLGF), and 266 to 286 (VLVA…LSAI). Catalysis depends on aspartate 319, which acts as the 4-aspartylphosphate intermediate. ATP is bound by residues aspartate 356, glutamate 360, 388–395 (FKAETRMS), and lysine 407. Residues aspartate 530 and aspartate 534 each contribute to the Mg(2+) site. A run of 3 helical transmembrane segments spans residues 600–620 (FAII…LNIM), 628–648 (AILS…PLAM), and 672–692 (GGVI…GLFI).

The protein belongs to the cation transport ATPase (P-type) (TC 3.A.3) family. Type IA subfamily. In terms of assembly, the system is composed of three essential subunits: KdpA, KdpB and KdpC.

The protein resides in the cell membrane. The enzyme catalyses K(+)(out) + ATP + H2O = K(+)(in) + ADP + phosphate + H(+). In terms of biological role, part of the high-affinity ATP-driven potassium transport (or Kdp) system, which catalyzes the hydrolysis of ATP coupled with the electrogenic transport of potassium into the cytoplasm. This subunit is responsible for energy coupling to the transport system and for the release of the potassium ions to the cytoplasm. In Bacillus thuringiensis (strain Al Hakam), this protein is Potassium-transporting ATPase ATP-binding subunit.